A 601-amino-acid chain; its full sequence is ATP-dependent RNA helicase DeaD (601 aa).

The short motif at 6–34 (STFSFLGLNPFIIQSLNEMGYVKPSPIQA) is the Q motif element. The 172-residue stretch at 37–208 (IPLLLEGRDV…KRFMRNPKEI (172 aa)) folds into the Helicase ATP-binding domain. Residue 50-57 (AQTGSGKT) coordinates ATP. A DEAD box motif is present at residues 156–159 (DEAD). One can recognise a Helicase C-terminal domain in the interval 231–378 (KTDALIRFLE…EVQLPKVELL (148 aa)). The span at 552 to 576 (SRHYENKTTHRSIFNKDKNSNRRVS) shows a compositional bias: basic and acidic residues. The tract at residues 552 to 601 (SRHYENKTTHRSIFNKDKNSNRRVSDGSFNKSNSPKKTEFKSSFFRRRNV) is disordered.

This sequence belongs to the DEAD box helicase family. DeaD/CsdA subfamily.

Its subcellular location is the cytoplasm. The catalysed reaction is ATP + H2O = ADP + phosphate + H(+). Its function is as follows. DEAD-box RNA helicase involved in various cellular processes at low temperature, including ribosome biogenesis, mRNA degradation and translation initiation. This chain is ATP-dependent RNA helicase DeaD, found in Buchnera aphidicola subsp. Acyrthosiphon pisum (strain APS) (Acyrthosiphon pisum symbiotic bacterium).